Here is a 530-residue protein sequence, read N- to C-terminus: ATP synthase subunit alpha (530 aa).

172–179 is an ATP binding site; the sequence is GDRQTGKT.

It belongs to the ATPase alpha/beta chains family. In terms of assembly, F-type ATPases have 2 components, CF(1) - the catalytic core - and CF(0) - the membrane proton channel. CF(1) has five subunits: alpha(3), beta(3), gamma(1), delta(1), epsilon(1). CF(0) has three main subunits: a(1), b(2) and c(9-12). The alpha and beta chains form an alternating ring which encloses part of the gamma chain. CF(1) is attached to CF(0) by a central stalk formed by the gamma and epsilon chains, while a peripheral stalk is formed by the delta and b chains.

It is found in the cell inner membrane. The enzyme catalyses ATP + H2O + 4 H(+)(in) = ADP + phosphate + 5 H(+)(out). Its function is as follows. Produces ATP from ADP in the presence of a proton gradient across the membrane. The alpha chain is a regulatory subunit. The chain is ATP synthase subunit alpha from Phocaeicola vulgatus (strain ATCC 8482 / DSM 1447 / JCM 5826 / CCUG 4940 / NBRC 14291 / NCTC 11154) (Bacteroides vulgatus).